Consider the following 178-residue polypeptide: Outer envelope pore protein 16-2, chloroplastic (178 aa).

The tract at residues 1 to 102 (MEKSGGRIVM…DALVKNTGKE (102 aa)) is contains beta strands. Residues 103–119 (SLQWGLAAGLYSGITYG) traverse the membrane as a helical segment.

It belongs to the Tim17/Tim22/Tim23 family. Plastid outer envelope porin OEP16 (TC 1.B.30) subfamily. Homodimer and oligomers in membrane. In terms of tissue distribution, detected in pollen and seeds. Present in leaves and cotyledons.

The protein resides in the plastid. It is found in the chloroplast outer membrane. Functionally, voltage-dependent high-conductance channel with a slight cation-selectivity; selective for amino acids but excludes triosephosphates or uncharged sugars. Non-essential amino acid-selective channel protein and translocation pore for NADPH:protochlorophyllide oxidoreductase A (PORA) and possibly PORB. This is Outer envelope pore protein 16-2, chloroplastic (OEP162) from Arabidopsis thaliana (Mouse-ear cress).